A 1242-amino-acid polypeptide reads, in one-letter code: MFFNPYLSGGVTGGAVAGGRRQRSQPGSAQGSGKRPPQKQFLQIVPRGVMFDGQTGLIKHKTGRLPLMFYREIKHLLSHDMVWPCPWRETLVGRVVGPIRFHTYDQTDAVLFFDSPENVSPRYRQHLVPSGNVLRFFGATEHGYSICVNVFGQRSYFYCEYSDTDRLREVIASVGELVPEPRTPYAVSVTPATKTSIYGYGTRPVPDLQCVSISNWTMARKIGEYLLEQGFPVYEVRVDPLTRLVIDRRITTFGWCSVNRYDWRQQGRASTCDIEVDCDVSDLVAVPDDSSWPRYRCLSFDIECMSGEGGFPCAEKSDDIVIQISCVCYETGGNTAVDQGIPNGNDGRGCTSEGVIFGHSGLHLFTIGTCGQVGPDVDVYEFPSEYELLLGFMLFFQRYAPAFVTGYNINSFDLKYILTRLEYLYKVDSQRFCKLPTAQGGRFFLHSPAVGFKRQYAAAFPSASHNNPASTAATKVYIAGSVVIDMYPVCMAKTNSPNYKLNTMAELYLRQRKDDLSYKDIPRCFVANAEGRAQVGRYCLQDAVLVRDLFNTINFHYEAGAIARLAKIPLRRVIFDGQQIRIYTSLLDECACRDFILPNHYSKGTTVPETNSVAVSPNAAIISTAAVPGDAGSVAAMFQMSPPLQSAPSSQDGVSPGSGSNSSSSVGVFSVGSGSSGGVGVSNDNHGAGGTAAVSYQGATVFEPEVGYYNDPVAVFDFASLYPSIIMAHNLCYSTLLVPGGEYPVDPADVYSVTLENGVTHRFVRASVRVSVLSELLNKWVSQRRAVRECMRECQDPVRRMLLDKEQMALKVTCNAFYGFTGVVNGMMPCLPIAASITRIGRDMLERTARFIKDNFSEPCFLHNFFNQEDYVVGTREGDSEESSALPEGLETSSGGSNERRVEARVIYGDTDSVFVRFRGLTPQALVARGPSLAHYVTACLFVEPVKLEFEKVFVSLMMICKKRYIGKVEGASGLSMKGVDLVRKTACEFVKGVTRDVLSLLFEDREVSEAAVRLSRLSLDEVKKYGVPRGFWRILRRLVQARDDLYLHRVRVEDLVLSSVLSKDISLYRQSNLPHIAVIKRLAARSEELPSVGDRVFYVLTAPGVRTAPQGSSDNGDSVTAGVVSRSDAIDGTDDDADGGGVEESNRRGGEPAKKRARKPPSAVCNYEVAEDPSYVREHGVPIHADKYFEQVLKAVTNVLSPVFPGGETARKDKFLHMVLPRRLHLEPAFLPYSVKAHECC.

4 disordered regions span residues 14 to 38, 644 to 665, 877 to 898, and 1108 to 1163; these read GAVA…RPPQ, LQSA…SSSS, EGDS…GGSN, and TAPQ…KPPS. The span at 653 to 665 shows a compositional bias: low complexity; that stretch reads GVSPGSGSNSSSS. Residues 1110-1119 are compositionally biased toward polar residues; sequence PQGSSDNGDS. Residues 1145 to 1155 show a composition bias toward basic and acidic residues; that stretch reads ESNRRGGEPAK.

This sequence belongs to the DNA polymerase type-B family. As to quaternary structure, forms a complex with the ssDNA-binding protein UL57, the DNA polymerase processivity factor UL44, and the alkaline exonuclease UL98. Interacts with the putative helicase-primase complex composed of UL70, UL102 and UL105 proteins; these interactions may coordinate leading and lagging strand DNA synthesis at the replication fork.

Its subcellular location is the host nucleus. It carries out the reaction DNA(n) + a 2'-deoxyribonucleoside 5'-triphosphate = DNA(n+1) + diphosphate. In terms of biological role, replicates viral genomic DNA in the late phase of lytic infection, producing long concatemeric DNA. The replication complex is composed of six viral proteins: the DNA polymerase, processivity factor, primase, primase-associated factor, helicase, and ssDNA-binding protein. This Homo sapiens (Human) protein is DNA polymerase catalytic subunit (UL54).